We begin with the raw amino-acid sequence, 32 residues long: Cytochrome b6-f complex subunit 7 (32 aa).

The chain crosses the membrane as a helical span at residues 9–27 (AAVFWVLIPVGLLGGVLLL).

This sequence belongs to the PetM family. As to quaternary structure, the 4 large subunits of the cytochrome b6-f complex are cytochrome b6, subunit IV (17 kDa polypeptide, PetD), cytochrome f and the Rieske protein, while the 4 small subunits are PetG, PetL, PetM and PetN. The complex functions as a dimer.

The protein resides in the cellular thylakoid membrane. Its function is as follows. Component of the cytochrome b6-f complex, which mediates electron transfer between photosystem II (PSII) and photosystem I (PSI), cyclic electron flow around PSI, and state transitions. The protein is Cytochrome b6-f complex subunit 7 of Prochlorococcus marinus (strain NATL1A).